The chain runs to 120 residues: Cytochrome b5 (120 aa).

A Cytochrome b5 heme-binding domain is found at 2–78 (PKVYSYQEVA…LKGLYIGDVD (77 aa)). 2 residues coordinate heme: His-37 and His-61. The chain crosses the membrane as a helical span at residues 98-118 (GSGTLVVILAILMLGVAYYLL).

The protein belongs to the cytochrome b5 family.

Its subcellular location is the endoplasmic reticulum membrane. It localises to the microsome membrane. Membrane bound hemoprotein which function as an electron carrier for several membrane bound oxygenases. It plays a role in fatty-acid desaturation and is also involved in several steps of the sterol biosynthesis pathway, particularly in the 4-demethylation of the 4,4'-dimethyl zymosterol. The protein is Cytochrome b5 (CYB5) of Saccharomyces cerevisiae (strain ATCC 204508 / S288c) (Baker's yeast).